We begin with the raw amino-acid sequence, 231 residues long: TATA-box-binding protein (231 aa).

Tandem repeats lie at residues 58 to 134 and 148 to 225.

Belongs to the TBP family. Belongs to the TFIID complex together with the TBP-associated factors (TAFs). Binds DNA as monomer.

It is found in the nucleus. General transcription factor that functions at the core of the DNA-binding multiprotein factor TFIID. Binding of TFIID to the TATA box is the initial transcriptional step of the pre-initiation complex (PIC), playing a role in the activation of eukaryotic genes transcribed by RNA polymerase II. In Schizosaccharomyces pombe (strain 972 / ATCC 24843) (Fission yeast), this protein is TATA-box-binding protein (tbp1).